Here is a 465-residue protein sequence, read N- to C-terminus: UDP-N-acetylmuramate--L-alanine ligase (465 aa).

Residue 112–118 (GTHGKTT) coordinates ATP.

The protein belongs to the MurCDEF family.

The protein localises to the cytoplasm. It carries out the reaction UDP-N-acetyl-alpha-D-muramate + L-alanine + ATP = UDP-N-acetyl-alpha-D-muramoyl-L-alanine + ADP + phosphate + H(+). The protein operates within cell wall biogenesis; peptidoglycan biosynthesis. Functionally, cell wall formation. The protein is UDP-N-acetylmuramate--L-alanine ligase of Burkholderia vietnamiensis (strain G4 / LMG 22486) (Burkholderia cepacia (strain R1808)).